Reading from the N-terminus, the 187-residue chain is uncharacterized protein (187 aa).

The region spanning 53–187 is the Tyr recombinase domain; sequence RKPHIYSPAD…CLQTSYVVPG (135 aa). Active-site residues include Arg98 and Lys123.

This sequence belongs to the 'phage' integrase family.

This is an uncharacterized protein from Sinorhizobium fredii (strain NBRC 101917 / NGR234).